Consider the following 182-residue polypeptide: Fatty-acid and retinol-binding protein 1 (182 aa).

Residues 1 to 17 (MIRATIILAAVAALAFS) form the signal peptide. Residues 86–106 (EKASKLHQIVKDKVNALNDEA) are a coiled coil.

This sequence belongs to the fatty-acid and retinol-binding protein (FARBP) family.

It is found in the secreted. In terms of biological role, probably binds lipids. The protein is Fatty-acid and retinol-binding protein 1 (far-1) of Caenorhabditis elegans.